Here is a 129-residue protein sequence, read N- to C-terminus: Small ribosomal subunit protein uS11 (129 aa).

It belongs to the universal ribosomal protein uS11 family. Part of the 30S ribosomal subunit. Interacts with proteins S7 and S18. Binds to IF-3.

Functionally, located on the platform of the 30S subunit, it bridges several disparate RNA helices of the 16S rRNA. Forms part of the Shine-Dalgarno cleft in the 70S ribosome. This is Small ribosomal subunit protein uS11 from Geobacillus kaustophilus (strain HTA426).